Here is a 414-residue protein sequence, read N- to C-terminus: Inositol-tetrakisphosphate 1-kinase (414 aa).

Lysine 18 provides a ligand contact to 1D-myo-inositol 1,3,4-trisphosphate. ATP is bound by residues arginine 106 and lysine 157. In terms of domain architecture, ATP-grasp spans 117-325 (EAYMEDDRIC…IATVLQGQST (209 aa)). Residues histidine 167 and lysine 199 each contribute to the 1D-myo-inositol 1,3,4-trisphosphate site. ATP is bound by residues 188–199 (QNFINHNAVLYK), serine 214, serine 232, and serine 236. 3 residues coordinate Mg(2+): aspartate 281, aspartate 295, and asparagine 297. Asparagine 297 is a 1D-myo-inositol 1,3,4-trisphosphate binding site. N6-acetyllysine; by EP300 and CREBBP is present on residues lysine 340 and lysine 383. Serine 396 carries the post-translational modification Phosphoserine. An N6-acetyllysine; by EP300 and CREBBP modification is found at lysine 410.

It belongs to the ITPK1 family. In terms of assembly, monomer. Interacts with GPS1/COPS1. Requires Mg(2+) as cofactor. Post-translationally, acetylation by EP300 and CREBBP destabilizes ITPK1, and down-regulates enzymatic activity. Deacetylated by SIRT1. Expressed in brain &gt; heart &gt; skeletal muscle = kidney = pancreas = liver = placenta &gt; lung. In brain, it is expressed in cerebellum, cerebral cortex, medulla, spinal cord, occipital lobe, frontal lobe, temporal lobe and putamen.

The catalysed reaction is 1D-myo-inositol 3,4,5,6-tetrakisphosphate + ATP = 1D-myo-inositol 1,3,4,5,6-pentakisphosphate + ADP + H(+). It catalyses the reaction 1D-myo-inositol 1,3,4-trisphosphate + ATP = 1D-myo-inositol 1,3,4,5-tetrakisphosphate + ADP + H(+). The enzyme catalyses 1D-myo-inositol 1,3,4-trisphosphate + ATP = 1D-myo-inositol 1,3,4,6-tetrakisphosphate + ADP + H(+). It carries out the reaction 1D-myo-inositol 3,4,6-trisphosphate + ATP = 1D-myo-inositol 1,3,4,6-tetrakisphosphate + ADP + H(+). The catalysed reaction is 1D-myo-inositol 1,3,4-trisphosphate + 1D-myo-inositol 1,3,4,5,6-pentakisphosphate = 1D-myo-inositol 3,4,5,6-tetrakisphosphate + 1D-myo-inositol 1,3,4,6-tetrakisphosphate. It catalyses the reaction 1D-myo-inositol 1,3,4-trisphosphate + 1D-myo-inositol 1,3,4,5,6-pentakisphosphate = 1D-myo-inositol 3,4,5,6-tetrakisphosphate + 1D-myo-inositol 1,3,4,5-tetrakisphosphate. Its function is as follows. Kinase that can phosphorylate various inositol polyphosphate such as Ins(3,4,5,6)P4 or Ins(1,3,4)P3. Phosphorylates Ins(3,4,5,6)P4 at position 1 to form Ins(1,3,4,5,6)P5. This reaction is thought to have regulatory importance, since Ins(3,4,5,6)P4 is an inhibitor of plasma membrane Ca(2+)-activated Cl(-) channels, while Ins(1,3,4,5,6)P5 is not. Also phosphorylates Ins(1,3,4)P3 on O-5 and O-6 to form Ins(1,3,4,6)P4, an essential molecule in the hexakisphosphate (InsP6) pathway. Also acts as an inositol polyphosphate phosphatase that dephosphorylates Ins(1,3,4,5)P4 and Ins(1,3,4,6)P4 to Ins(1,3,4)P3, and Ins(1,3,4,5,6)P5 to Ins(3,4,5,6)P4. May also act as an isomerase that interconverts the inositol tetrakisphosphate isomers Ins(1,3,4,5)P4 and Ins(1,3,4,6)P4 in the presence of ADP and magnesium. Probably acts as the rate-limiting enzyme of the InsP6 pathway. Modifies TNF-alpha-induced apoptosis by interfering with the activation of TNFRSF1A-associated death domain. Plays an important role in MLKL-mediated necroptosis. Produces highly phosphorylated inositol phosphates such as inositolhexakisphosphate (InsP6) which bind to MLKL mediating the release of an N-terminal auto-inhibitory region leading to its activation. Essential for activated phospho-MLKL to oligomerize and localize to the cell membrane during necroptosis. This chain is Inositol-tetrakisphosphate 1-kinase, found in Homo sapiens (Human).